The primary structure comprises 348 residues: uncharacterized protein (348 aa).

NADP(+) contacts are provided by Lys-41 and Tyr-170. A Phosphoserine modification is found at Ser-339.

It belongs to the NAD(P)-dependent epimerase/dehydratase family. Dihydroflavonol-4-reductase subfamily.

This is an uncharacterized protein from Saccharomyces cerevisiae (strain ATCC 204508 / S288c) (Baker's yeast).